The following is a 291-amino-acid chain: Undecaprenyl-diphosphatase (291 aa).

A run of 8 helical transmembrane segments spans residues 1-21 (MFII…LTEF), 48-68 (SAFT…AWVF), 102-122 (LHVL…DDFI), 126-146 (LFSV…MIIA), 162-182 (INYF…WPGF), 203-223 (SDFT…LSLL), 231-251 (IADI…GLIA), and 267-287 (FAIY…GFGI).

It belongs to the UppP family.

It localises to the cell membrane. The catalysed reaction is di-trans,octa-cis-undecaprenyl diphosphate + H2O = di-trans,octa-cis-undecaprenyl phosphate + phosphate + H(+). Functionally, catalyzes the dephosphorylation of undecaprenyl diphosphate (UPP). Confers resistance to bacitracin. The protein is Undecaprenyl-diphosphatase of Staphylococcus aureus (strain Mu3 / ATCC 700698).